We begin with the raw amino-acid sequence, 186 residues long: Ribosome-recycling factor (186 aa).

This sequence belongs to the RRF family.

Its subcellular location is the cytoplasm. Functionally, responsible for the release of ribosomes from messenger RNA at the termination of protein biosynthesis. May increase the efficiency of translation by recycling ribosomes from one round of translation to another. The chain is Ribosome-recycling factor from Cupriavidus metallidurans (strain ATCC 43123 / DSM 2839 / NBRC 102507 / CH34) (Ralstonia metallidurans).